We begin with the raw amino-acid sequence, 154 residues long: 3-hydroxyacyl-[acyl-carrier-protein] dehydratase FabZ (154 aa).

The active site involves histidine 55.

It belongs to the thioester dehydratase family. FabZ subfamily.

It localises to the cytoplasm. The catalysed reaction is a (3R)-hydroxyacyl-[ACP] = a (2E)-enoyl-[ACP] + H2O. In terms of biological role, involved in unsaturated fatty acids biosynthesis. Catalyzes the dehydration of short chain beta-hydroxyacyl-ACPs and long chain saturated and unsaturated beta-hydroxyacyl-ACPs. This Nitratidesulfovibrio vulgaris (strain ATCC 29579 / DSM 644 / CCUG 34227 / NCIMB 8303 / VKM B-1760 / Hildenborough) (Desulfovibrio vulgaris) protein is 3-hydroxyacyl-[acyl-carrier-protein] dehydratase FabZ.